Here is a 510-residue protein sequence, read N- to C-terminus: Histidine ammonia-lyase (510 aa).

The 5-imidazolinone (Ala-Gly) cross-link spans 143 to 145 (ASG). Position 144 is a 2,3-didehydroalanine (Ser) (serine 144).

The protein belongs to the PAL/histidase family. Post-translationally, contains an active site 4-methylidene-imidazol-5-one (MIO), which is formed autocatalytically by cyclization and dehydration of residues Ala-Ser-Gly.

The protein localises to the cytoplasm. The catalysed reaction is L-histidine = trans-urocanate + NH4(+). The protein operates within amino-acid degradation; L-histidine degradation into L-glutamate; N-formimidoyl-L-glutamate from L-histidine: step 1/3. This is Histidine ammonia-lyase from Photobacterium profundum (strain SS9).